A 222-amino-acid chain; its full sequence is Peptide methionine sulfoxide reductase MsrA 2 (222 aa).

The active site involves C56.

The protein belongs to the MsrA Met sulfoxide reductase family.

The catalysed reaction is L-methionyl-[protein] + [thioredoxin]-disulfide + H2O = L-methionyl-(S)-S-oxide-[protein] + [thioredoxin]-dithiol. The enzyme catalyses [thioredoxin]-disulfide + L-methionine + H2O = L-methionine (S)-S-oxide + [thioredoxin]-dithiol. In terms of biological role, has an important function as a repair enzyme for proteins that have been inactivated by oxidation. Catalyzes the reversible oxidation-reduction of methionine sulfoxide in proteins to methionine. In Nostoc sp. (strain PCC 7120 / SAG 25.82 / UTEX 2576), this protein is Peptide methionine sulfoxide reductase MsrA 2 (msrA2).